A 166-amino-acid polypeptide reads, in one-letter code: RNA polymerase sigma factor SigV (166 aa).

A Polymerase core binding motif is present at residues 38 to 51 (DIVQESIKKALSSV). The H-T-H motif DNA-binding region spans 131-150 (LEEIAEITGENTNTVKTRLY).

The protein belongs to the sigma-70 factor family. ECF subfamily. In terms of assembly, interacts with RsiV.

Sigma factors are initiation factors that promote the attachment of RNA polymerase to specific initiation sites and are then released. Positively regulates the expression of proteins involved in stress responses against bacitracin, paraquat and tellurite. In Bacillus subtilis (strain 168), this protein is RNA polymerase sigma factor SigV (sigV).